Reading from the N-terminus, the 384-residue chain is MVMTSPTRKPSGDVRPDEPLHHLDQPFREFLDGLPADRPPWFCFFSSGLLHVLHHFLRFTPERLNCVFICSGLSKEEAELRDRMSGGRPVFDMTEQVGSHEIFELLVRNLDRPFGIVDVDCFVTETDWFERCMDGLEPGVAVSGPLSYGPIPLAAPPFLALDPRVRPDIERAIGGTVTPAAYSYTAPGPEKEIDGAMVRLIEPHHERALARVVALEGPRLPFPQGGLVDVLDDGREVRSHERYHHLQNGNEVIRVVFDGLMFYQLMALAAGLRIAHFHSFPGTKVFAPQLVHAGGISYWHRLRPSEIAAGINELPWAAHVDALLLEEFNRRADVPASYRTRGTRLAANLRRSMVDMAGLRDELRAKLDSSGVDVTDPRWAVVLG.

The catalysed reaction is dTDP-L-dihydrostreptose + streptidine 6-phosphate = O-(1-&gt;4)-alpha-L-dihydrostreptosyl-streptidine 6-phosphate + dTDP + H(+). Its pathway is antibiotic biosynthesis; streptomycin biosynthesis. In terms of biological role, is probably a dihydrostreptosyl glycosyltransferase, involved in the first glycosylation step condensing streptidine-6-phosphate and dihydrostreptose. The sequence is that of dTDP-dihydrostreptose--streptidine-6-phosphate dihydrostreptosyltransferase (strH) from Streptomyces griseus.